A 416-amino-acid polypeptide reads, in one-letter code: Phosphoglycerate kinase (416 aa).

Substrate contacts are provided by residues 24-26 (DLN), R40, 63-66 (HLGR), R122, and R162. ATP-binding positions include K212, G300, E331, and 360–363 (GGDS).

Belongs to the phosphoglycerate kinase family. Monomer.

The protein localises to the cytoplasm. It catalyses the reaction (2R)-3-phosphoglycerate + ATP = (2R)-3-phospho-glyceroyl phosphate + ADP. Its pathway is carbohydrate degradation; glycolysis; pyruvate from D-glyceraldehyde 3-phosphate: step 2/5. The protein is Phosphoglycerate kinase of Mycobacterium ulcerans (strain Agy99).